The following is a 197-amino-acid chain: dITP/XTP pyrophosphatase (197 aa).

11-16 (SHNAGK) lines the substrate pocket. Residues glutamate 42 and aspartate 71 each contribute to the Mg(2+) site. Aspartate 71 acts as the Proton acceptor in catalysis. Substrate-binding positions include serine 72, 155-158 (FGYD), lysine 178, and 183-184 (HR).

The protein belongs to the HAM1 NTPase family. In terms of assembly, homodimer. Mg(2+) is required as a cofactor.

The catalysed reaction is XTP + H2O = XMP + diphosphate + H(+). It catalyses the reaction dITP + H2O = dIMP + diphosphate + H(+). The enzyme catalyses ITP + H2O = IMP + diphosphate + H(+). Its function is as follows. Pyrophosphatase that catalyzes the hydrolysis of nucleoside triphosphates to their monophosphate derivatives, with a high preference for the non-canonical purine nucleotides XTP (xanthosine triphosphate), dITP (deoxyinosine triphosphate) and ITP. Seems to function as a house-cleaning enzyme that removes non-canonical purine nucleotides from the nucleotide pool, thus preventing their incorporation into DNA/RNA and avoiding chromosomal lesions. The polypeptide is dITP/XTP pyrophosphatase (Pseudomonas aeruginosa (strain ATCC 15692 / DSM 22644 / CIP 104116 / JCM 14847 / LMG 12228 / 1C / PRS 101 / PAO1)).